A 302-amino-acid polypeptide reads, in one-letter code: Haloalkane dehalogenase (302 aa).

Residues 48–150 (PVLLMHGEPS…AGLVIANTGL (103 aa)) enclose the AB hydrolase-1 domain. Aspartate 123 serves as the catalytic Nucleophile. The active-site Proton donor is the aspartate 249. The active-site Proton acceptor is histidine 278.

Belongs to the haloalkane dehalogenase family. Type 1 subfamily. As to quaternary structure, monomer.

The catalysed reaction is 1-haloalkane + H2O = a halide anion + a primary alcohol + H(+). Functionally, catalyzes hydrolytic cleavage of carbon-halogen bonds in halogenated aliphatic compounds, leading to the formation of the corresponding primary alcohols, halide ions and protons. This chain is Haloalkane dehalogenase, found in Caulobacter sp. (strain K31).